The following is a 130-amino-acid chain: Protein ApaG (130 aa).

In terms of domain architecture, ApaG spans 3–127 (RAVTRHIEVT…FSLDSPDGKR (125 aa)).

The sequence is that of Protein ApaG from Bradyrhizobium sp. (strain ORS 278).